The primary structure comprises 167 residues: uncharacterized protein (167 aa).

Transmembrane regions (helical) follow at residues 96–115 (YVPA…FNFY) and 119–138 (WGAL…IIAV).

Its subcellular location is the cell membrane. This is an uncharacterized protein from Bacillus subtilis (strain 168).